The primary structure comprises 579 residues: Mitogen-activated protein kinase kinase kinase 7 (579 aa).

The tract at residues 1-300 is interaction with MAPK8IP1; that stretch reads MSTASAASSS…FPGADEPLQY (300 aa). Residues 36–291 form the Protein kinase domain; sequence IEVEEVVGRG…KIMTHLMRYF (256 aa). ATP-binding positions include 42–50 and Lys-63; that span reads VGRGAFGVV. Lys-72 is covalently cross-linked (Glycyl lysine isopeptide (Lys-Gly) (interchain with G-Cter in ubiquitin)). Catalysis depends on Asp-156, which acts as the Proton acceptor. Lys-158 is covalently cross-linked (Glycyl lysine isopeptide (Lys-Gly) (interchain with G-Cter in ubiquitin)). 2 positions are modified to phosphothreonine; by autocatalysis: Thr-184 and Thr-187. At Ser-192 the chain carries Phosphoserine; by autocatalysis. Lys-209 participates in a covalent cross-link: Glycyl lysine isopeptide (Lys-Gly) (interchain with G-Cter in ubiquitin). Disordered regions lie at residues 301–338 and 354–391; these read PCQY…MEQV and KNQA…MSAD. The span at 306-338 shows a compositional bias: polar residues; sequence DEGQSNSATSTGSFMDIASTNTSNKSDTNMEQV. Residues 361 to 375 are compositionally biased toward low complexity; the sequence is SESGRLSLGASRGSS. Phosphoserine is present on residues Ser-367, Ser-389, and Ser-412. Residues 416 to 425 are compositionally biased toward polar residues; it reads LTVTGTEPGQ. Residues 416–466 form a disordered region; it reads LTVTGTEPGQVSSRSSSPSVRMITTSGPTSEKPARSHPWTPDDSTDTNGSD. Over residues 426 to 436 the composition is skewed to low complexity; it reads VSSRSSSPSVR. Ser-428 is subject to Phosphoserine.

This sequence belongs to the protein kinase superfamily. STE Ser/Thr protein kinase family. MAP kinase kinase kinase subfamily. As to quaternary structure, can form homodimer. Binds both upstream activators and downstream substrates in multimolecular complexes. Interacts with TAB1/MAP3K7IP1, TAB2/MAP3K7IP2 and TAB3/MAP3K7IP3. Identified in the TRIKA2 complex composed of MAP3K7/TAK1, TAB1/MAP3K7IP1 and TAB2/MAP3K7IP2. Interacts with PPM1L and PPM1B/PP2CB. Interaction with PP2A and PPP6C leads to its repressed activity. Interacts with TRAF6 and TAB1/MAP3K7IP1; during IL-1 signaling. Interacts with TAOK1 and TAOK2; interaction with TAOK2 interferes with MAP3K7 interaction with IKKA, thus preventing NF-kappa-B activation. Interacts with DYNC2I2 (via WD domains). Interacts with CYLD and RBCK1. Interacts with TGFBR1; induces MAP3K7/TAK1 activation by TRAF6. Interacts with MAPK8IP1 and SMAD6. Interacts with isoform 1 of VRK2. Interacts with DAB2; the interaction is induced by TGF-beta stimulation and may mediate TGF-beta stimulated JNK activation. Interacts with TRIM5. Part of a complex containing ITCH, NDFIP1 and MAP3K7. Interacts with PLEKHM1 (via N- and C-terminus). Interacts with TRIM8. Found in a complex with SH3RF1, RAC2, MAP2K7/MKK7, MAPK8IP1/JIP1, MAPK8/JNK1 and MAPK9/JNK2. Interacts with SASH1. Interacts with RIPK1. It depends on Mg(2+) as a cofactor. In terms of processing, association with TAB1/MAP3K7IP1 promotes autophosphorylation and subsequent activation. Association with TAB2/MAP3K7IP2, itself associated with free unanchored Lys-63 polyubiquitin chain, promotes autophosphorylation and subsequent activation of MAP3K7. Dephosphorylation at Thr-187 by PP2A and PPP6C leads to inactivation. 'Lys-48'-linked polyubiquitination at Lys-72 is induced by TNFalpha, and leads to proteasomal degradation. Undergoes 'Lys-48'-linked polyubiquitination catalyzed by ITCH. 'Lys-63'-linked polyubiquitination at Lys-158 by TRIM8 does not lead to proteasomal degradation but contributes to autophosphorylation and activation. Deubiquitinated by CYLD, a protease that selectively cleaves 'Lys-63'-linked ubiquitin chains.Deubiquitinated by USP19; leading to negative regulation of TNF-alpha- and IL-1beta-triggered NF-kappa-B activation.

It localises to the cytoplasm. The protein resides in the cell membrane. The enzyme catalyses L-seryl-[protein] + ATP = O-phospho-L-seryl-[protein] + ADP + H(+). It carries out the reaction L-threonyl-[protein] + ATP = O-phospho-L-threonyl-[protein] + ADP + H(+). Its activity is regulated as follows. Activated by pro-inflammatory cytokines and in response to physical and chemical stresses, including osmotic stress, oxidative stress, arsenic and ultraviolet light irradiation. Activated by 'Lys-63'-linked polyubiquitination and by autophosphorylation. Association with TAB1/MAP3K7IP1 and TAB2/MAP3K7IP2 promotes activation through autophosphorylation, whereas PPM1B/PP2CB, PP2A and PPP6C dephosphorylation leads to inactivation. Ceramides are also able to activate MAP3K7/TAK1. Serine/threonine kinase which acts as an essential component of the MAP kinase signal transduction pathway. Plays an important role in the cascades of cellular responses evoked by changes in the environment. Mediates signal transduction of TRAF6, various cytokines including interleukin-1 (IL-1), transforming growth factor-beta (TGFB), TGFB-related factors like BMP2 and BMP4, toll-like receptors (TLR), tumor necrosis factor receptor CD40 and B-cell receptor (BCR). Once activated, acts as an upstream activator of the MKK/JNK signal transduction cascade and the p38 MAPK signal transduction cascade through the phosphorylation and activation of several MAP kinase kinases like MAP2K1/MEK1, MAP2K3/MKK3, MAP2K6/MKK6 and MAP2K7/MKK7. These MAP2Ks in turn activate p38 MAPKs and c-jun N-terminal kinases (JNKs); both p38 MAPK and JNK pathways control the transcription factors activator protein-1 (AP-1). Independently of MAP2Ks and p38 MAPKs, acts as a key activator of NF-kappa-B by promoting activation of the I-kappa-B-kinase (IKK) core complex. Mechanistically, recruited to polyubiquitin chains of RIPK2 and IKBKG/NEMO via TAB2/MAP3K7IP2 and TAB3/MAP3K7IP3, and catalyzes phosphorylation and activation of IKBKB/IKKB component of the IKK complex, leading to NF-kappa-B activation. In osmotic stress signaling, plays a major role in the activation of MAPK8/JNK1, but not that of NF-kappa-B. Promotes TRIM5 capsid-specific restriction activity. Phosphorylates RIPK1 at 'Ser-321' which positively regulates RIPK1 interaction with RIPK3 to promote necroptosis but negatively regulates RIPK1 kinase activity and its interaction with FADD to mediate apoptosis. Phosphorylates STING1 in response to cGAMP-activation, promoting association between STEEP1 and STING1 and STING1 translocation to COPII vesicles. In Mus musculus (Mouse), this protein is Mitogen-activated protein kinase kinase kinase 7 (Map3k7).